A 757-amino-acid polypeptide reads, in one-letter code: Catalase-peroxidase (757 aa).

A cross-link (tryptophyl-tyrosyl-methioninium (Trp-Tyr) (with M-274)) is located at residues 101 to 248 (WHSAGTYRIG…LAAVQMGLIY (148 aa)). Residue His-102 is the Proton acceptor of the active site. Positions 210 to 231 (SEGVHHPDEHSGAKEKASKNSD) are disordered. A compositionally biased stretch (basic and acidic residues) spans 212–231 (GVHHPDEHSGAKEKASKNSD). The segment at residues 248–274 (YVNPEGPDGRPDPLASARDIRETFARM) is a cross-link (tryptophyl-tyrosyl-methioninium (Tyr-Met) (with W-101)). Heme b is bound at residue His-289. The segment at 293–312 (KTHGAAPADNVGPEPEAGEL) is disordered.

This sequence belongs to the peroxidase family. Peroxidase/catalase subfamily. As to quaternary structure, homodimer or homotetramer. The cofactor is heme b. In terms of processing, formation of the three residue Trp-Tyr-Met cross-link is important for the catalase, but not the peroxidase activity of the enzyme.

It catalyses the reaction H2O2 + AH2 = A + 2 H2O. The enzyme catalyses 2 H2O2 = O2 + 2 H2O. Its function is as follows. Bifunctional enzyme with both catalase and broad-spectrum peroxidase activity. This is Catalase-peroxidase from Xylella fastidiosa (strain M12).